The chain runs to 129 residues: Small ribosomal subunit protein uS11 (129 aa).

This sequence belongs to the universal ribosomal protein uS11 family. As to quaternary structure, part of the 30S ribosomal subunit. Interacts with proteins S7 and S18. Binds to IF-3.

Located on the platform of the 30S subunit, it bridges several disparate RNA helices of the 16S rRNA. Forms part of the Shine-Dalgarno cleft in the 70S ribosome. The polypeptide is Small ribosomal subunit protein uS11 (Hahella chejuensis (strain KCTC 2396)).